We begin with the raw amino-acid sequence, 219 residues long: Dehydration-responsive element-binding protein 1E (219 aa).

A compositionally biased stretch (low complexity) spans 1 to 19 (MEWAYYGSGYSSSGTPSPV). Positions 1 to 44 (MEWAYYGSGYSSSGTPSPVGGDGDEDSYMTVSSAPPKRRAGRTK) are disordered. A DNA-binding region (AP2/ERF) is located at residues 52 to 109 (VYKGVRSRNPGRWVCEVREPHGKQRIWLGTFETAEMAARAHDVAAMALRGRAACLNFA).

The protein belongs to the AP2/ERF transcription factor family. ERF subfamily.

Its subcellular location is the nucleus. Transcriptional activator that binds specifically to the DNA sequence 5'-[AG]CCGAC-3'. Binding to the C-repeat/DRE element mediates high salinity- and dehydration-inducible transcription. This is Dehydration-responsive element-binding protein 1E (DREB1E) from Oryza sativa subsp. indica (Rice).